Here is a 657-residue protein sequence, read N- to C-terminus: Glycogen debranching enzyme (657 aa).

Catalysis depends on D336, which acts as the Nucleophile. E371 (proton donor) is an active-site residue. The segment at 460–481 (ANGEENRDGTNNNYSNNHGKEG) is disordered.

Belongs to the glycosyl hydrolase 13 family.

The catalysed reaction is Hydrolysis of (1-&gt;6)-alpha-D-glucosidic linkages to branches with degrees of polymerization of three or four glucose residues in limit dextrin.. Its pathway is glycan degradation; glycogen degradation. Removes maltotriose and maltotetraose chains that are attached by 1,6-alpha-linkage to the limit dextrin main chain, generating a debranched limit dextrin. The protein is Glycogen debranching enzyme of Escherichia coli O157:H7.